An 89-amino-acid chain; its full sequence is Cytochrome c6 (89 aa).

The heme c site is built by C15, C18, H19, and M61.

It belongs to the cytochrome c family. PetJ subfamily. In terms of assembly, monomer. Post-translationally, binds 1 heme c group covalently per subunit.

The protein resides in the plastid. The protein localises to the chloroplast thylakoid lumen. Functionally, functions as an electron carrier between membrane-bound cytochrome b6-f and photosystem I in oxygenic photosynthesis. The protein is Cytochrome c6 (petJ) of Chlorolobion braunii (Green alga).